A 571-amino-acid polypeptide reads, in one-letter code: Cytosolic Fe-S cluster assembly factor NAR1 (571 aa).

[4Fe-4S] cluster contacts are provided by Cys20, Cys62, Cys65, Cys68, Cys204, and Cys259. Residues 415–437 (AKPSRMPGGKPIGSARRPNGKAS) form a disordered region. Cys449 and Cys453 together coordinate [4Fe-4S] cluster.

The protein belongs to the NARF family.

In terms of biological role, component of the cytosolic Fe/S protein assembly machinery. Required for maturation of extramitochondrial Fe/S proteins. May play a role in the transfer of pre-assembled Fe/S clusters to target apoproteins. The polypeptide is Cytosolic Fe-S cluster assembly factor NAR1 (NAR1) (Sclerotinia sclerotiorum (strain ATCC 18683 / 1980 / Ss-1) (White mold)).